We begin with the raw amino-acid sequence, 206 residues long: Small ribosomal subunit protein uS4 (206 aa).

The S4 RNA-binding domain occupies 96–156; the sequence is TRLDNVVYRM…EKSRTQARIK (61 aa).

This sequence belongs to the universal ribosomal protein uS4 family. Part of the 30S ribosomal subunit. Contacts protein S5. The interaction surface between S4 and S5 is involved in control of translational fidelity.

Functionally, one of the primary rRNA binding proteins, it binds directly to 16S rRNA where it nucleates assembly of the body of the 30S subunit. Its function is as follows. With S5 and S12 plays an important role in translational accuracy. In Shewanella halifaxensis (strain HAW-EB4), this protein is Small ribosomal subunit protein uS4.